The sequence spans 119 residues: Holo-[acyl-carrier-protein] synthase (119 aa).

Mg(2+)-binding residues include aspartate 8 and glutamate 58.

It belongs to the P-Pant transferase superfamily. AcpS family. Mg(2+) serves as cofactor.

It is found in the cytoplasm. It carries out the reaction apo-[ACP] + CoA = holo-[ACP] + adenosine 3',5'-bisphosphate + H(+). Its function is as follows. Transfers the 4'-phosphopantetheine moiety from coenzyme A to a Ser of acyl-carrier-protein. This Bacillus thuringiensis subsp. konkukian (strain 97-27) protein is Holo-[acyl-carrier-protein] synthase.